Reading from the N-terminus, the 380-residue chain is N-acetylaspartylglutamate synthase A (380 aa).

Residues 115–300 (FQELAGHGVP…VGAIIADYAM (186 aa)) enclose the ATP-grasp domain. Residues Lys154, 189–199 (QKYVKESHGKD), and Arg215 contribute to the ATP site. Asp260, Glu273, and Asn275 together coordinate Mg(2+). Residues Asp260, Glu273, and Asn275 each contribute to the Mn(2+) site. A Phosphoserine modification is found at Ser319. A disordered region spans residues 345-370 (GSTSSESEPELGEARDSSVKTMGAPP).

It belongs to the RimK family. Mg(2+) is required as a cofactor. It depends on Mn(2+) as a cofactor. As to expression, highly expressed in spinal cord and brain.

It localises to the cytoplasm. The enzyme catalyses N-acetyl-L-aspartate + L-glutamate + ATP = N-acetyl-L-aspartyl-L-glutamate + ADP + phosphate + H(+). It carries out the reaction N-acetyl-L-aspartate + 2 L-glutamate + 2 ATP = N-acetyl-L-aspartyl-L-glutamyl-L-glutamate + 2 ADP + 2 phosphate + 2 H(+). In terms of biological role, catalyzes the synthesis of N-acetyl-L-aspartyl-L-glutamate (NAAG) and N-acetyl-L-aspartyl-L-glutamyl-L-glutamate. The sequence is that of N-acetylaspartylglutamate synthase A (Rimkla) from Mus musculus (Mouse).